Reading from the N-terminus, the 172-residue chain is Transcriptional regulator CdrL (172 aa).

Residues 72–113 (SPSAVEEVRTTPASGGRADAEEPGDDGETDAEHADTSATGDE) form a disordered region. The DZANK-type zinc finger occupies 116–160 (CSQCGAELSADHVYCPNCGGKATHRVFCECGDEIRADWAFCPRCG).

The protein belongs to the CdrL family.

The protein resides in the cytoplasm. Functionally, transcriptional regulator involved in the control of cell division. The chain is Transcriptional regulator CdrL from Halobacterium salinarum (strain ATCC 29341 / DSM 671 / R1).